Consider the following 62-residue polypeptide: Large ribosomal subunit protein eL24 (62 aa).

Residues Cys-6, Cys-9, Cys-32, and Cys-36 each contribute to the Zn(2+) site. The segment at Cys-6–Cys-36 adopts a C4-type zinc-finger fold.

Belongs to the eukaryotic ribosomal protein eL24 family. In terms of assembly, part of the 50S ribosomal subunit. Forms a cluster with proteins L3 and L14. Requires Zn(2+) as cofactor.

Its function is as follows. Binds to the 23S rRNA. The polypeptide is Large ribosomal subunit protein eL24 (Methanococcus maripaludis (strain C7 / ATCC BAA-1331)).